The chain runs to 60 residues: Large ribosomal subunit protein bL32B (60 aa).

Residues 1–19 show a composition bias toward basic residues; the sequence is MAVPKRKMSRANTRHRRSQ. The interval 1–20 is disordered; that stretch reads MAVPKRKMSRANTRHRRSQW.

It belongs to the bacterial ribosomal protein bL32 family.

The sequence is that of Large ribosomal subunit protein bL32B from Saccharopolyspora erythraea (strain ATCC 11635 / DSM 40517 / JCM 4748 / NBRC 13426 / NCIMB 8594 / NRRL 2338).